The sequence spans 901 residues: Vacuolar import and degradation protein 22 (901 aa).

Over residues Met-1–Ser-10 the composition is skewed to polar residues. Residues Met-1 to Asp-54 form a disordered region. N-linked (GlcNAc...) asparagine glycosylation is present at Asn-21. The span at Ala-27–Asp-37 shows a compositional bias: low complexity. A BED-type zinc finger spans residues Arg-66–Asn-122. The Zn(2+) site is built by Cys-87, Cys-90, His-110, and His-115. Residues Asn-242 and Asn-291 are each glycosylated (N-linked (GlcNAc...) asparagine). Residues Tyr-381–Pro-401 traverse the membrane as a helical segment. Residues Asn-540, Asn-645, Asn-649, Asn-652, Asn-662, Asn-669, Asn-673, Asn-688, and Asn-722 are each glycosylated (N-linked (GlcNAc...) asparagine). Positions Asn-646 to Asn-677 are enriched in low complexity. A disordered region spans residues Asn-646 to Ser-727. A compositionally biased stretch (basic and acidic residues) spans Asp-679 to Asn-688. Residues Asn-718–Ser-727 are compositionally biased toward low complexity.

The protein belongs to the VID22 family. In terms of processing, glycosylated.

It localises to the cell membrane. Its subcellular location is the nucleus. Functionally, has a role in the negative regulation of gluconeogenesis. Imports fructose-1,6-bisphosphatase (FBPase) into the intermediate vacuole import and degradation (Vid) vesicles. This is an indirect role and requires cyclophilin A. The sequence is that of Vacuolar import and degradation protein 22 (VID22) from Saccharomyces cerevisiae (strain ATCC 204508 / S288c) (Baker's yeast).